Reading from the N-terminus, the 1230-residue chain is MASASYHISNLLEKMTSSDKDFRFMATNDLMTELQKDSIKLDDDSERKVVKMILKLLEDKNGEVQNLAVKCLGPLVSKVKEYQVETIVDTLCTNMLSDKEQLRDISSIGLKTVIGELPPASSGSALAANVCKKITGRLTSAIAKQEDVSVQLEALDIMADMLSRQGGLLVNFHPSILTCLLPQLTSPRLAVRKRTIIALGHLVMSCGNIVFVDLIEHLLSELSKNDSMSTTRTYIQCIAAISRQAGHRIGEYLEKIIPLVVKFCNVDDDELREYCIQAFESFVRRCPKEVYPHVSTIINICLKYLTYDPNYNYDDEDEDENAMDADGGDDDDQGSDDEYSDDDDMSWKVRRAAAKCLDAVVSTRHEMLPEFYKTVSPALISRFKEREENVKADVFHAYLSLLKQTRPVQSWLCDPDAMEQGETPLTMLQSQVPNIVKALHKQMKEKSVKTRQCCFNMLTELVNVLPGALTQHIPVLVPGIIFSLNDKSSSSNLKIDALSCLYVILCNHSPQVFHPHVQALVPPVVACVGDPFYKITSEALLVTQQLVKVIRPLDQPSSFDATPYIKDLFTCTIKRLKAADIDQEVKERAISCMGQIICNLGDNLGPDLSNTLQIFLERLKNEITRLTTVKALTLIAGSPLKIDLRPVLGEGVPILASFLRKNQRALKLGTLSALDILIKNYSDSLTAAMIDAVLDELPPLISESDMHVSQMAISFLTTLAKVYPSSLSKISGSILNELIGLVRSPLLQGGALSAMLDFFQALVVTGTNNLGYMDLLRMLTGPVYSQSTALTHKQSYYSIAKCVAALTRACPKEGPAVVGQFIQDVKNSRSTDSIRLLALLSLGEVGHHIDLSGQLELKSVILEAFSSPSEEVKSAASYALGSISVGNLPEYLPFVLQEITSQPKRQYLLLHSLKEIISSASVVGLKPYVENIWALLLKHCECAEEGTRNVVAECLGKLTLIDPETLLPRLKGYLISGSSYARSSVVTAVKFTISDHPQPIDPLLKNCIGDFLKTLEDPDLNVRRVALVTFNSAAHNKPSLIRDLLDSVLPHLYNETKVRKELIREVEMGPFKHTVDDGLDIRKAAFECMYTLLDSCLDRLDIFEFLNHVEDGLKDHYDIKMLTFLMLVRLSTLCPSAVLQRLDRLVEPLRATCTTKVKANSVKQEFEKQDELKRSAMRAVAALLTIPEAEKSPLMSEFQSQISSNPELAAIFESIQKDSSSTNLESMDTS.

The residue at position 2 (A2) is an N-acetylalanine. 12 HEAT repeats span residues 2 to 39 (ASAS…KDSI), 44 to 81 (DSER…KVKE), 83 to 119 (QVET…ELPP), 131 to 165 (CKKI…LSRQ), 171 to 208 (NFHP…SCGN), 210 to 247 (VFVD…QAGH), 248 to 282 (RIGE…FESF), 289 to 366 (EVYP…TRHE), 370 to 407 (EFYK…QTRP), 424 to 467 (PLTM…VLPG), 471 to 510 (QHIP…NHSP), and 515 to 552 (PHVQ…VIRP). K55 is modified (N6-acetyllysine). The tract at residues 315–344 (DEDEDENAMDADGGDDDDQGSDDEYSDDDD) is disordered. S335 bears the Phosphoserine mark. S558 is subject to Phosphoserine. 15 HEAT repeats span residues 563-602 (PYIK…NLGD), 606-643 (PDLS…LKID), 646-683 (PVLG…NYSD), 688-725 (AMID…VYPS), 729-768 (KISG…TGTN), 770-808 (LGYM…ALTR), 809-845 (ACPK…LGEV), 852-889 (SGQL…GNLP), 890-927 (EYLP…GLKP), 928-960 (YVEN…KLTL), 961-998 (IDPE…DHPQ), 1002-1039 (PLLK…NKPS), 1043-1097 (DLLD…DSCL), 1099-1133 (RLDI…LSTL), and 1140-1189 (QRLD…IPEA). K971 is modified (N6-acetyllysine).

It belongs to the CAND family. As to quaternary structure, interacts with TBP. Part of a complex that contains CUL1 and RBX1. Interacts with unneddylated cullins: interacts with CUL1, CUL2, CUL3, CUL4A, CUL4B and CUL5. Does not bind neddylated CUL1. Interaction with cullins is abolished in presence of COMMD1, which antagonizes with CAND1 for interacting with cullins. Interacts with ERCC6. Interacts with DCUN1D1, DCUN1D2, DCUN1D3, DCUN1D4 and DCUN1D5; these interactions are bridged by cullins and strongly inhibits the neddylation of cullins. As to expression, detected in heart, brain, spleen, liver, skeletal muscle, kidney and testis.

The protein resides in the cytoplasm. The protein localises to the nucleus. Key assembly factor of SCF (SKP1-CUL1-F-box protein) E3 ubiquitin ligase complexes that promotes the exchange of the substrate-recognition F-box subunit in SCF complexes, thereby playing a key role in the cellular repertoire of SCF complexes. Acts as a F-box protein exchange factor. The exchange activity of CAND1 is coupled with cycles of neddylation conjugation: in the deneddylated state, cullin-binding CAND1 binds CUL1-RBX1, increasing dissociation of the SCF complex and promoting exchange of the F-box protein. Probably plays a similar role in other cullin-RING E3 ubiquitin ligase complexes. May indirectly enhance transcription from various types of promoters. The sequence is that of Cullin-associated NEDD8-dissociated protein 1 (Cand1) from Rattus norvegicus (Rat).